Consider the following 234-residue polypeptide: Leucyl/phenylalanyl-tRNA--protein transferase (234 aa).

The protein belongs to the L/F-transferase family.

The protein resides in the cytoplasm. The catalysed reaction is N-terminal L-lysyl-[protein] + L-leucyl-tRNA(Leu) = N-terminal L-leucyl-L-lysyl-[protein] + tRNA(Leu) + H(+). It carries out the reaction N-terminal L-arginyl-[protein] + L-leucyl-tRNA(Leu) = N-terminal L-leucyl-L-arginyl-[protein] + tRNA(Leu) + H(+). It catalyses the reaction L-phenylalanyl-tRNA(Phe) + an N-terminal L-alpha-aminoacyl-[protein] = an N-terminal L-phenylalanyl-L-alpha-aminoacyl-[protein] + tRNA(Phe). In terms of biological role, functions in the N-end rule pathway of protein degradation where it conjugates Leu, Phe and, less efficiently, Met from aminoacyl-tRNAs to the N-termini of proteins containing an N-terminal arginine or lysine. This Shigella boydii serotype 18 (strain CDC 3083-94 / BS512) protein is Leucyl/phenylalanyl-tRNA--protein transferase.